Consider the following 209-residue polypeptide: Putative cardiolipin synthase (209 aa).

Transmembrane regions (helical) follow at residues 27 to 47 (AFVY…ILVF), 82 to 102 (VTVP…VLTL), 126 to 146 (VTYV…TILL), and 157 to 177 (LLAC…WAFV).

The protein belongs to the CDP-alcohol phosphatidyltransferase class-I family.

Its subcellular location is the cell membrane. It catalyses the reaction a CDP-1,2-diacyl-sn-glycerol + a 1,2-diacyl-sn-glycero-3-phospho-(1'-sn-glycerol) = a cardiolipin + CMP + H(+). The protein operates within lipid metabolism; phospholipid metabolism. Its function is as follows. May catalyze the biosynthesis of cardiolipin from phosphatidylglycerol (PG) and CDP-diacylglycerol. This is Putative cardiolipin synthase from Mycobacterium bovis (strain ATCC BAA-935 / AF2122/97).